A 904-amino-acid chain; its full sequence is Phosphoenolpyruvate carboxylase (904 aa).

The segment at 52 to 71 (ISRRESDAPPSTLSEQLTGR) is disordered. The segment covering 60–70 (PPSTLSEQLTG) has biased composition (polar residues). Residues histidine 151 and lysine 570 contribute to the active site.

Belongs to the PEPCase type 1 family. It depends on Mg(2+) as a cofactor.

It catalyses the reaction oxaloacetate + phosphate = phosphoenolpyruvate + hydrogencarbonate. Functionally, forms oxaloacetate, a four-carbon dicarboxylic acid source for the tricarboxylic acid cycle. The chain is Phosphoenolpyruvate carboxylase from Xanthomonas euvesicatoria pv. vesicatoria (strain 85-10) (Xanthomonas campestris pv. vesicatoria).